The primary structure comprises 349 residues: Probable formaldehyde dehydrogenase AdhA (349 aa).

Positions 44, 66, 97, 100, 103, 111, and 161 each coordinate Zn(2+).

Belongs to the zinc-containing alcohol dehydrogenase family. Zn(2+) serves as cofactor.

Its function is as follows. Functions in the protection against aldehyde-stress. The sequence is that of Probable formaldehyde dehydrogenase AdhA (adhA) from Bacillus subtilis (strain 168).